A 554-amino-acid chain; its full sequence is Terpene synthase 17 (554 aa).

Residues Asp-306, Asp-310, and Glu-458 each coordinate Mg(2+). The DDXXD motif motif lies at 306–310 (DDTYD).

The protein belongs to the terpene synthase family. Tpsa subfamily. Mg(2+) serves as cofactor. Requires Mn(2+) as cofactor.

The catalysed reaction is (2E,6E)-farnesyl diphosphate = (+)-valencene + diphosphate. It carries out the reaction (2E,6E)-farnesyl diphosphate = (E)-beta-farnesene + diphosphate. The enzyme catalyses (2E,6E)-farnesyl diphosphate = gamma-gurjunene + diphosphate. It catalyses the reaction (2Z,6Z)-farnesyl diphosphate = beta-bisabolene + diphosphate. The catalysed reaction is (2Z,6Z)-farnesyl diphosphate = (E)-gamma-bisabolene + diphosphate. It carries out the reaction (2E)-geranyl diphosphate = limonene + diphosphate. The enzyme catalyses (2E)-geranyl diphosphate = beta-myrcene + diphosphate. It catalyses the reaction (2E)-geranyl diphosphate = (E)-beta-ocimene + diphosphate. The catalysed reaction is (2E)-geranyl diphosphate = terpinolene + diphosphate. It carries out the reaction (2E)-geranyl diphosphate = gamma-terpinene + diphosphate. The enzyme catalyses (2Z,6Z)-farnesyl diphosphate = (Z)-gamma-bisabolene + diphosphate. It catalyses the reaction (2E,6E)-farnesyl diphosphate = (1S,5S,6R)-alpha-bergamotene + diphosphate. The catalysed reaction is (2Z,6Z)-farnesyl diphosphate = (1S,5S,6S)-alpha-bergamotene + diphosphate. It functions in the pathway secondary metabolite biosynthesis; terpenoid biosynthesis. In terms of biological role, sesquiterpene synthase involved in the biosynthesis of volatile compounds. Mediates the conversion of (2E,6E)-farnesyl diphosphate (FPP) into gamma-gurjunene, (E)-beta-farnesene and (+)-valencene, and of (2Z,6Z)-farnesyl diphosphate ((ZZ)-FPP) into (E)-alpha-bergamotene and (Z)-gamma-bisabolene as well as beta-bisabolene, (Z)-alpha-bergamotene and (E)-gamma-bisabolene to a lower extent. Can act with a low efficiency as a monoterpene synthase with geranyl diphosphate (GPP) as substrate, thus producing beta-myrcene, (E)-beta-ocimene, limonene, terpinolene, gamma-terpinene and (Z)-beta-ocimene. In Solanum habrochaites (Wild tomato), this protein is Terpene synthase 17.